Reading from the N-terminus, the 1035-residue chain is NACHT, LRR and PYD domains-containing protein 3 (1035 aa).

The Pyrin domain occupies 1–93; sequence MKMMSVRCKL…WEKAKKDQPE (93 aa). S5 is modified (phosphoserine). A disulfide bridge links C8 with C106. Phosphotyrosine is present on Y13. C128 carries the S-palmitoyl cysteine lipid modification. A required for binding to phosphatidylinositol 4-phosphate (PtdIns4P) region spans residues 129 to 132; that stretch reads KKKK. Phosphotyrosine is present on residues Y134 and Y138. An FISNA domain is found at 138–208; the sequence is YRRHVRSRFY…SSLKLELLFE (71 aa). At S159 the chain carries Phosphoserine. Y166 bears the Phosphotyrosine mark. T167 contacts ATP. Residue S199 is modified to Phosphoserine. The 317-residue stretch at 218–534 folds into the NACHT domain; that stretch reads HTVVFQGAAG…EFFAAMYYLL (317 aa). 224–231 is a binding site for ATP; that stretch reads GAAGIGKT. 2 positions are modified to phosphoserine: S263 and S293. K322 is covalently cross-linked (Glycyl lysine isopeptide (Lys-Gly) (interchain with G-Cter in ubiquitin)). At S332 the chain carries Phosphoserine. The KFERQ-like motif 1 signature appears at 353–357; the sequence is LEKLQ. A Glycyl lysine isopeptide (Lys-Gly) (interchain with G-Cter in ubiquitin) cross-link involves residue K428. H520 is a binding site for ATP. Residues 603–607 carry the KFERQ-like motif 2 motif; that stretch reads QVRLE. K689 is covalently cross-linked (Glycyl lysine isopeptide (Lys-Gly) (interchain with G-Cter in ubiquitin)). S727 and S734 each carry phosphoserine. LRR repeat units lie at residues 741–761, 770–791, 798–818, 827–848, and 855–875; these read SLTELDLSDNTLGDPGMRVLC, NIQRLWLGRCGLTHQCCFNISS, KLVELDLSDNALGDFGVRLLC, NLQKLWLVSCCLTSACCQDLAL, and SLTRLYIGENALGDSGVQVLC. The KFERQ-like motif 3 signature appears at 797-801; it reads QKLVE. Phosphoserine is present on S805. 3 S-palmitoyl cysteine lipidation sites follow: C836, C837, and C843. Residue Y860 is modified to Phosphotyrosine. K877 participates in a covalent cross-link: Glycyl lysine isopeptide (Lys-Gly) (interchain with G-Cter in ubiquitin). LRR repeat units follow at residues 884–905, 912–932, 941–962, and 969–990; these read NLQKLGLVNSGLTSLCCSALTS, NLTHLYLRSNALGDMGLKLLC, KLQMLELDNCSLTSHSCWDLST, and SLRKLNLSNNDLGDLCVVTLCE. Residue C957 is the site of S-palmitoyl cysteine attachment. A Glycyl lysine isopeptide (Lys-Gly) (interchain with G-Cter in ubiquitin) cross-link involves residue K972. The KFERQ-like motif 4 signature appears at 990–994; that stretch reads EVLKQ. The residue at position 1034 (S1034) is a Phosphoserine.

This sequence belongs to the NLRP family. As to quaternary structure, sensor component of NLRP3 inflammasomes; inflammasomes are supramolecular complexes that assemble in the cytosol in response to pathogens and other damage-associated signals and play critical roles in innate immunity and inflammation. The core of NLRP3 inflammasomes consists of a signal sensor component (NLRP3), an adapter (PYCARD/ASC), which recruits an effector pro-inflammatory caspase (CASP1 and, possibly, CASP4 and CASP5). Homodecamer; inactive NLRP3 forms homodecameric double-ring cages that hide pyrin domains within NACHT-LRR rings to avoid premature activation. Interacts (via pyrin domain) with PYCARD/ASC (via pyrin domain); interaction is direct. Interacts (via LRR repeat domain) with NEK7 (via N-terminus); the interaction is required for the formation of the complex NLRP3:PYCARD, oligomerization of PYCARD/ASC and activation of CASP1. Interacts (via LRR repeat domain) with NR4A1/Nur77 (via N-terminus); the interaction is direct, requires activation of NR4A1 by its ligands NBRE-containing dsDNA and lipopolysaccharide, and stimulates the association of NLRP3 with NEK7 for non-canonical NLRP3 inflammasome activation. Interacts with CARD8; leading to inhibit formation of the NLRP3 inflammasome. Interacts with MEFV; this interaction targets NLRP3 to degradation by autophagy, hence preventing excessive IL1B- and IL18-mediated inflammation. Interacts with EIF2AK2/PKR; this interaction requires EIF2AK2 activity, is accompanied by EIF2AK2 autophosphorylation and promotes inflammasome assembly in response to specific stimuli. Interacts with GBP5 (via DAPIN domain); this interaction promotes inflammasome assembly in response to microbial and soluble, but not crystalline, agents. Interacts with PML (isoform PML-1) (via the leucine-rich repeat (LRR) domain); PML-mediated increase in NLRP3 inflammasome activation does not depend upon this interaction. Interacts (via NACHT domain) with DHX33 (via DEAH box); NLRP3 activation in presence of cytosolic dsRNA is mediated by DHX33. Interacts (via NACHT and LRR domains) with ARRB2; this interaction is direct and inducible by polyunsaturated fatty acids (PUFAs). Interacts (via NACHT domain) with DDX3X under both LPS-primed and inflammasome-activating conditions. Interacts with IRF4 (via the LRR domain); this interaction is direct and is required for optimal IRF4 binding to IL4 promoter and efficient IL4 transactivation during differentiation of Th2 helper T-cells. Interacts with MAVS; promoting localization to mitochondria and activation of the NLRP3 inflammasome. Interacts with MARK4; promoting localization of NLRP3 to the microtubule organizing center (MTOC). Interacts with TRIM50; this interaction also promotes NLRP3 oligomerization and subsequent inflammasome activation. Interacts with IRGM; preventing NLRP3 inflammasome assembly and promoting NLRP3 degradation. Interacts (via NACHT and LLR domains) with ABHD8; this interaction is enhanced in the presence of NLRP3 inflammasome inducers, such as ATP, nigericin, silica, or alum. Interaction with ABHD8 leads the recruitment of ZDHHC12, hence facilitating NLRP3 palmitoylation and degradation by the chaperone-mediated autophagy pathway (CMA), therefore attenuating NLRP3 inflammasome activation. Phosphorylation by MAPK8/JNK1 increases inflammasome activation by promoting deubiquitination by BRCC3 and NLRP3 homooligomerization. Phosphorylation at Ser-805 by CSNK1A1 prevents inflammasome activation by preventing NEK7 recruitment. Phosphorylation at Ser-5 in the pyrin domain inhibits homomultimerization of NLRP3 and activation of the NLRP3 inflammasome: dephosphorylation by protein phosphatase 2A (PP2A) promotes assembly of the NLRP3 inflammasome. Phosphorylation at Ser-293 by PKD/PRKD1 promotes NLRP3 inflammasome assembly. Phosphorylation by ERK1/MAPK3 promotes NLRP3 inflammasome assembly. Phosphorylation by BTK (at Tyr-134, Tyr-138 and Tyr-166) in the region that mediates binding to phosphatidylinositol phosphate, promotes relocalization of NLRP3 and assembly of the NLRP3 inflammasome. Phosphorylation at Tyr-860 inhibits NLRP3 inflammasome assembly: dephosphorylation by PTPN22 promotes inflammasome activation. Phosphorylated by LATS1 and LATS2 at Ser-263 following palmitoylation by ZDHHC1, promoting its relocalization to the microtubule organizing center (MTOC), where NLRP3 is activated by NEK7, leading to inflammasome assembly and activation. Post-translationally, ubiquitinated; undergoes both 'Lys-48'- and 'Lys-63'-linked polyubiquitination. Ubiquitination does not lead to degradation, but inhibits inflammasome activation. Deubiquitination is catalyzed by BRCC3 and associated with NLRP3 activation and inflammasome assembly. This process can be induced by the activation of Toll-like receptors (by LPS), through a non-transcriptional pathway dependent on the mitochondrial production of reactive oxygen species, and by ATP. Ubiquitinated by TRIM31 via 'Lys-48'-linked ubiquitination, leading to its degradation by the proteasome. Ubiquitinated at Lys-689 by the SCF(FBXL2) complex, leading to its degradation by the proteasome. Ubiquitinated by TRIM35 via 'lys-48' and 'Lys-63'-linked ubiquitination leading to inhibition of NLRP3 inflammasome activation. Undergoes 'Lys-27'-linked polyubiquitination by MARCHF5, leading to NLRP3-NEK7 complex formation and NLRP3 oligomerization. In terms of processing, the disulfide bond in the pyrin domain might play a role in reactive oxygen species-mediated activation. Palmitoylation by ZDHHC12 promotes NLRP3 degradation by the chaperone-mediated autophagy pathway (CMA) and therefore limits NLRP3 inflammasome activation. Interaction with ZDHHC12, and hence NLRP3 palmitoylation, is greatly enhanced by ABHD8. Following palmitoylation, HSPA8/HSC70 recognizes and binds the KFERQ-like motifs on NLRP3 and promotes NLRP3 recruitment to lysosomes, where it is degraded via the chaperone-mediated autophagy pathway in a LAMP2-dependent process. Palmitoylation at Cys-836 and Cys-837 by ZDHHC5 enhances its binding to NEK7 leading to inflammasome assembly and activation. Palmitoylation at Cys-128 and Cys-957 by ZDHHC1 facilitates phosphorylation at Ser-263 by LATS1 and LATS2, promoting its relocalization to the microtubule organizing center (MTOC), where NLRP3 is activated by NEK7, leading to inflammasome assembly and activation. Depalmitoylated by ABHD17A. Post-translationally, degraded via selective autophagy following interaction with IRGM. IRGM promotes NLRP3 recruitment to autophagosome membranes, promoting its SQSTM1/p62-dependent autophagy-dependent degradation.

It is found in the cytoplasm. Its subcellular location is the cytosol. It localises to the inflammasome. The protein localises to the cytoskeleton. The protein resides in the microtubule organizing center. It is found in the golgi apparatus membrane. Its subcellular location is the endoplasmic reticulum. It localises to the mitochondrion. The protein localises to the secreted. The protein resides in the nucleus. The enzyme catalyses ATP + H2O = ADP + phosphate + H(+). Under resting conditions, NLRP3 binds ADP and is autoinhibited. Inactive NLRP3 forms homodecameric double-ring cages that hide pyrin domains within NACHT-LRR rings to avoid premature activation. NLRP3 activation stimuli include extracellular ATP, nigericin, reactive oxygen species, crystals of monosodium urate or cholesterol, amyloid-beta fibers, environmental or industrial particles and nanoparticles, such as asbestos, silica, aluminum salts, cytosolic dsRNA, etc. Almost all stimuli trigger intracellular K(+) efflux. These stimuli lead to membrane perturbations that induce activation of NLRP3. Upon activation, NLRP3 is transported to microtubule organizing center (MTOC), where it is unlocked by NEK7, leading to its relocalization to dispersed trans-Golgi network (dTGN) vesicle membranes and recruitment of PYCARD/ASC for the formation of an active inflammasome complex. NEK7-activated NLRP3 forms a disk-shaped inflammasome. NLRP3 and PYCARD/ASC interact via their respective pyrin domains; interaction initiates speck formation (nucleation) which greatly enhances further addition of soluble PYCARD/ASC molecules to the speck in a prion-like polymerization process. Clustered PYCARD/ASC nucleates the formation of CASP1 filaments through the interaction of their respective CARD domains, acting as a platform for CASP1 polymerization and activation. Active CASP1 then processes IL1B and IL18 precursors, leading to the release of mature cytokines in the extracellular milieu and inflammatory response. NLRP3 inflammasome assembly is inhibited by IRGM, which impedes NLRP3 oligomerization. NLRP3 inflammasome is inhibited by cyclic AMP (cAMP), which directly binds NLRP3; inhibition is relieved by calcium-sensing receptor CASR, which inhibits production of cAMP. Specifically inhibited by sulfonylurea MCC950 (also named CP-456,773, CRID3), a potent and specific small-molecule inhibitor of the NLRP3 inflammasome that acts by preventing ATP hydrolysis. Functionally, sensor component of the NLRP3 inflammasome, which mediates inflammasome activation in response to defects in membrane integrity, leading to secretion of inflammatory cytokines IL1B and IL18 and pyroptosis. In response to pathogens and other damage-associated signals that affect the integrity of membranes, initiates the formation of the inflammasome polymeric complex composed of NLRP3, CASP1 and PYCARD/ASC. Recruitment of pro-caspase-1 (proCASP1) to the NLRP3 inflammasome promotes caspase-1 (CASP1) activation, which subsequently cleaves and activates inflammatory cytokines IL1B and IL18 and gasdermin-D (GSDMD), promoting cytokine secretion and pyroptosis. Activation of NLRP3 inflammasome is also required for HMGB1 secretion; stimulating inflammatory responses. Under resting conditions, ADP-bound NLRP3 is autoinhibited. NLRP3 activation stimuli include extracellular ATP, nigericin, reactive oxygen species, crystals of monosodium urate or cholesterol, amyloid-beta fibers, environmental or industrial particles and nanoparticles, such as asbestos, silica, aluminum salts, cytosolic dsRNA, etc. Almost all stimuli trigger intracellular K(+) efflux. These stimuli lead to membrane perturbation and activation of NLRP3. Upon activation, NLRP3 is transported to microtubule organizing center (MTOC), where it is unlocked by NEK7, leading to its relocalization to dispersed trans-Golgi network (dTGN) vesicle membranes and formation of an active inflammasome complex. Associates with dTGN vesicle membranes by binding to phosphatidylinositol 4-phosphate (PtdIns4P). Shows ATPase activity. Its function is as follows. Independently of inflammasome activation, regulates the differentiation of T helper 2 (Th2) cells and has a role in Th2 cell-dependent asthma and tumor growth. During Th2 differentiation, required for optimal IRF4 binding to IL4 promoter and for IRF4-dependent IL4 transcription. Binds to the consensus DNA sequence 5'-GRRGGNRGAG-3'. May also participate in the transcription of IL5, IL13, GATA3, CCR3, CCR4 and MAF. The chain is NACHT, LRR and PYD domains-containing protein 3 from Rattus norvegicus (Rat).